The chain runs to 611 residues: Broad-specificity linear acyl-CoA dehydrogenase FadE5 (611 aa).

FAD-binding positions include 162–165 (MVLT), Ser171, and Thr198. Ser171 lines the a 2,3-saturated acyl-CoA pocket. Residues 224 to 225 (TK) and Arg301 each bind a 2,3-saturated acyl-CoA. Arg326 is a binding site for FAD. Residue Lys338 coordinates a 2,3-saturated acyl-CoA. FAD is bound at residue 420–424 (QTLGG). Glu447 contacts a 2,3-saturated acyl-CoA. Catalysis depends on Glu447, which acts as the Proton acceptor. Thr449 serves as a coordination point for FAD. A 2,3-saturated acyl-CoA-binding positions include Asp456 and 460–461 (RK).

Belongs to the acyl-CoA dehydrogenase family. In terms of assembly, homodimer. Requires FAD as cofactor.

The catalysed reaction is a long-chain 2,3-saturated fatty acyl-CoA + oxidized [electron-transfer flavoprotein] + H(+) = a long-chain (2E)-enoyl-CoA + reduced [electron-transfer flavoprotein]. The enzyme catalyses a medium-chain 2,3-saturated fatty acyl-CoA + oxidized [electron-transfer flavoprotein] + H(+) = a medium-chain (2E)-enoyl-CoA + reduced [electron-transfer flavoprotein]. It carries out the reaction a short-chain 2,3-saturated fatty acyl-CoA + oxidized [electron-transfer flavoprotein] + H(+) = a short-chain (2E)-enoyl-CoA + reduced [electron-transfer flavoprotein]. It catalyses the reaction octadecanoyl-CoA + oxidized [electron-transfer flavoprotein] + H(+) = (2E)-octadecenoyl-CoA + reduced [electron-transfer flavoprotein]. The catalysed reaction is oxidized [electron-transfer flavoprotein] + hexadecanoyl-CoA + H(+) = (2E)-hexadecenoyl-CoA + reduced [electron-transfer flavoprotein]. The enzyme catalyses dodecanoyl-CoA + oxidized [electron-transfer flavoprotein] + H(+) = (2E)-dodecenoyl-CoA + reduced [electron-transfer flavoprotein]. It carries out the reaction decanoyl-CoA + oxidized [electron-transfer flavoprotein] + H(+) = (2E)-decenoyl-CoA + reduced [electron-transfer flavoprotein]. It catalyses the reaction hexanoyl-CoA + oxidized [electron-transfer flavoprotein] + H(+) = (2E)-hexenoyl-CoA + reduced [electron-transfer flavoprotein]. The catalysed reaction is butanoyl-CoA + oxidized [electron-transfer flavoprotein] + H(+) = (2E)-butenoyl-CoA + reduced [electron-transfer flavoprotein]. The protein operates within lipid metabolism; fatty acid metabolism. Functionally, acyl-CoA dehydrogenase that exhibits broad specificity for linear acyl-CoA substrates, with a preference for long-chain substrates. This chain is Broad-specificity linear acyl-CoA dehydrogenase FadE5, found in Mycobacterium tuberculosis (strain ATCC 25618 / H37Rv).